Here is a 224-residue protein sequence, read N- to C-terminus: UPF0758 protein Bpro_0948 (224 aa).

Residues 102-224 (LFSTPQAVRD…AVSMAELGLL (123 aa)) form the MPN domain. Zn(2+)-binding residues include His173, His175, and Asp186. Residues 173–186 (HNHPSGAATPSRAD) carry the JAMM motif motif.

It belongs to the UPF0758 family.

This Polaromonas sp. (strain JS666 / ATCC BAA-500) protein is UPF0758 protein Bpro_0948.